We begin with the raw amino-acid sequence, 354 residues long: Methylthioribose-1-phosphate isomerase (354 aa).

Residues 58–60, arginine 101, and glutamine 204 contribute to the substrate site; that span reads RGA. Aspartate 245 serves as the catalytic Proton donor. 255–256 contributes to the substrate binding site; the sequence is NK.

It belongs to the eIF-2B alpha/beta/delta subunits family. MtnA subfamily.

The enzyme catalyses 5-(methylsulfanyl)-alpha-D-ribose 1-phosphate = 5-(methylsulfanyl)-D-ribulose 1-phosphate. The protein operates within amino-acid biosynthesis; L-methionine biosynthesis via salvage pathway; L-methionine from S-methyl-5-thio-alpha-D-ribose 1-phosphate: step 1/6. Its function is as follows. Catalyzes the interconversion of methylthioribose-1-phosphate (MTR-1-P) into methylthioribulose-1-phosphate (MTRu-1-P). This chain is Methylthioribose-1-phosphate isomerase, found in Xanthomonas campestris pv. campestris (strain ATCC 33913 / DSM 3586 / NCPPB 528 / LMG 568 / P 25).